The following is a 59-amino-acid chain: Cytochrome c oxidase subunit 9, mitochondrial (59 aa).

Topologically, residues 2–8 (TIAPITG) are mitochondrial matrix. A helical membrane pass occupies residues 9-44 (TIKRRVIMDIVLGFSLGGVMASYWWWGFHMDKINKR). Over 45-56 (EKFYAELAERKK) the chain is Mitochondrial intermembrane. The propeptide at 57 to 59 (QEN) is removed in mature form.

Belongs to the fungal cytochrome c oxidase subunit 7a family. As to quaternary structure, component of the cytochrome c oxidase (complex IV, CIV), a multisubunit enzyme composed of 12 subunits. The complex is composed of a catalytic core of 3 subunits COX1, COX2 and COX3, encoded in the mitochondrial DNA, and 9 supernumerary subunits COX4, COX5A (or COX5B), COX6, COX7, COX8, COX9, COX12, COX13 and COX26, which are encoded in the nuclear genome. The complex exists as a monomer or a dimer and forms supercomplexes (SCs) in the inner mitochondrial membrane with a dimer of ubiquinol-cytochrome c oxidoreductase (cytochrome b-c1 complex, complex III, CIII), resulting in 2 different assemblies (supercomplexes III(2)IV and III(2)IV(2)).

The protein resides in the mitochondrion inner membrane. It participates in energy metabolism; oxidative phosphorylation. Functionally, component of the cytochrome c oxidase, the last enzyme in the mitochondrial electron transport chain which drives oxidative phosphorylation. The respiratory chain contains 3 multisubunit complexes succinate dehydrogenase (complex II, CII), ubiquinol-cytochrome c oxidoreductase (cytochrome b-c1 complex, complex III, CIII) and cytochrome c oxidase (complex IV, CIV), that cooperate to transfer electrons derived from NADH and succinate to molecular oxygen, creating an electrochemical gradient over the inner membrane that drives transmembrane transport and the ATP synthase. Cytochrome c oxidase is the component of the respiratory chain that catalyzes the reduction of oxygen to water. Electrons originating from reduced cytochrome c in the intermembrane space (IMS) are transferred via the dinuclear copper A center (CU(A)) of COX2 and heme A of COX1 to the active site in COX1, a binuclear center (BNC) formed by heme A3 and copper B (CU(B)). The BNC reduces molecular oxygen to 2 water molecules using 4 electrons from cytochrome c in the IMS and 4 protons from the mitochondrial matrix. This chain is Cytochrome c oxidase subunit 9, mitochondrial (COX9), found in Saccharomyces cerevisiae (strain ATCC 204508 / S288c) (Baker's yeast).